The primary structure comprises 671 residues: Probable boron transporter 6 (671 aa).

Residues 1–37 (MKSEGESGPFQGILRDIEGRRKCYKQDWIRGIKTGIR) are Cytoplasmic-facing. A helical membrane pass occupies residues 38 to 58 (ILAPTCYIFFASSLPVVAFGE). The Extracellular portion of the chain corresponds to 59 to 77 (QLSKHTGGALSAVETLAST). Residues 78–98 (SICGIIHAIFGGQPLLIVGVA) form a helical membrane-spanning segment. Over 99–123 (EPTIIMYTYLYSFCISRPDIGRELY) the chain is Cytoplasmic. The chain crosses the membrane as a helical span at residues 124–144 (LAWVAWVCVWTSVLLILLSIF). The Extracellular segment spans residues 145-157 (NAGTIITRFTRIA). A helical membrane pass occupies residues 158–178 (GELFGMLIAVLFLQEAIKGLI). Over 179-195 (SEFHAPEIKNQETGKSH) the chain is Cytoplasmic. A helical membrane pass occupies residues 196-216 (FLLIYANGLLAVIFSLGLLIT). Residues 217 to 235 (ALKSRRAKSWKYGFGWLRS) lie on the Extracellular side of the membrane. A helical transmembrane segment spans residues 236–256 (FIGDYGVPLMVLLWTALSYTV). Over 257 to 291 (PSEVLPSVPRRLFCPLPWEPASLYHWTVVKDMGKV) the chain is Cytoplasmic. A helical membrane pass occupies residues 292–312 (PIMYILAAFIPGVMIAGLYFF). Over 313 to 332 (DHSVASQMAQQKEFNLKNPS) the chain is Extracellular. Residues 333–353 (AYHYDIFLLGIITLICGLLGL) traverse the membrane as a helical segment. Topologically, residues 354–469 (PPSNGVLPQA…EQRVSNLLQS (116 aa)) are cytoplasmic. Residues 470-490 (VLVGLTLLAVTVIKMIPSSVL) traverse the membrane as a helical segment. Residues 491–557 (WGYFAYMAID…QLVYFLLCYG (67 aa)) lie on the Extracellular side of the membrane. A helical membrane pass occupies residues 558–578 (MTWIPMAGIFFPALFFLLISI). Residues 579-671 (REHLLPKLFD…EEKHVTFEPH (93 aa)) are Cytoplasmic-facing.

Belongs to the anion exchanger (TC 2.A.31.3) family.

It localises to the membrane. Its function is as follows. Probable boron transporter. Boron is essential for maintaining the integrity of plants cell walls. This chain is Probable boron transporter 6 (BOR6), found in Arabidopsis thaliana (Mouse-ear cress).